The sequence spans 195 residues: MKEIVIASNNQGKINDFKVIFPDYHVIGISELIPDFDVEETGSTFEENAILKSEAAAKALNKTVIADDSGLEVFALNGEPGIYSARYAGENKSDEANIEKLLNKLGNTTDRRAQFVCVISMSGPDMETKVFKGTVSGEIADGKYGENGFGYDPIFYVPKLDKTMAQLSKEQKGQISHRRNAINLLQAFLEGDKNV.

8 to 13 is a binding site for substrate; the sequence is SNNQGK. Mg(2+)-binding residues include E39 and D68. D68 acts as the Proton acceptor in catalysis. Residues S69, 149–152, K172, and 177–178 each bind substrate; these read FGYD and HR.

It belongs to the HAM1 NTPase family. As to quaternary structure, homodimer. Mg(2+) serves as cofactor.

It carries out the reaction XTP + H2O = XMP + diphosphate + H(+). The catalysed reaction is dITP + H2O = dIMP + diphosphate + H(+). It catalyses the reaction ITP + H2O = IMP + diphosphate + H(+). Its function is as follows. Pyrophosphatase that catalyzes the hydrolysis of nucleoside triphosphates to their monophosphate derivatives, with a high preference for the non-canonical purine nucleotides XTP (xanthosine triphosphate), dITP (deoxyinosine triphosphate) and ITP. Seems to function as a house-cleaning enzyme that removes non-canonical purine nucleotides from the nucleotide pool, thus preventing their incorporation into DNA/RNA and avoiding chromosomal lesions. The sequence is that of dITP/XTP pyrophosphatase from Staphylococcus aureus (strain COL).